A 376-amino-acid polypeptide reads, in one-letter code: N,N'-diacetylbacillosaminyl-diphospho-undecaprenol alpha-1,3-N-acetylgalactosaminyltransferase (376 aa).

Belongs to the glycosyltransferase group 1 family.

The enzyme catalyses N,N'-diacetyl-alpha-D-bacillosaminyl-tri-trans,hepta-cis-undecaprenyl diphosphate + UDP-N-acetyl-alpha-D-galactosamine = N-acetyl-alpha-D-galactosaminyl-(1-&gt;3)-N,N'-diacetyl-alpha-D-bacillosaminyl-tri-trans,hepta-cis-undecaprenyl diphosphate + UDP + H(+). It functions in the pathway protein modification; protein glycosylation. Functionally, adds the first GalNAc residue on to the isoprenoid-linked bacillosamine (2,4-diacetamido-2,4,6-trideoxyglucose) carrier in the N-linked protein glycosylation pathway. Acts first on the undecaprenylpyrophosphate-linked bacillosamine (Und-PP-Bac) substrate to yield the disaccharide. The polypeptide is N,N'-diacetylbacillosaminyl-diphospho-undecaprenol alpha-1,3-N-acetylgalactosaminyltransferase (pglA) (Campylobacter jejuni subsp. jejuni serotype O:2 (strain ATCC 700819 / NCTC 11168)).